The following is a 235-amino-acid chain: Lipoprotein-releasing system ATP-binding protein LolD 1 (235 aa).

The region spanning 5-234 (FEARGITKSY…DGRLQLCTPL (230 aa)) is the ABC transporter domain. 42–49 (GASGSGKT) contributes to the ATP binding site.

Belongs to the ABC transporter superfamily. Lipoprotein translocase (TC 3.A.1.125) family. In terms of assembly, the complex is composed of two ATP-binding proteins (LolD) and two transmembrane proteins (LolC and LolE).

Its subcellular location is the cell inner membrane. Part of the ABC transporter complex LolCDE involved in the translocation of mature outer membrane-directed lipoproteins, from the inner membrane to the periplasmic chaperone, LolA. Responsible for the formation of the LolA-lipoprotein complex in an ATP-dependent manner. The polypeptide is Lipoprotein-releasing system ATP-binding protein LolD 1 (Chlorobium luteolum (strain DSM 273 / BCRC 81028 / 2530) (Pelodictyon luteolum)).